Reading from the N-terminus, the 419-residue chain is Chaperone protein dnaJ 2 (419 aa).

One can recognise a J domain in the interval 14–75; sequence KFYEILGVPK…EKREIYDQYG (62 aa). The CR-type zinc finger occupies 136–220; it reads GTTKKLSLSR…CKGEKVVSEK (85 aa). Zn(2+)-binding residues include Cys149, Cys152, Cys165, Cys168, Cys192, Cys195, Cys208, and Cys211. CXXCXGXG motif repeat units lie at residues 149–156, 165–172, 192–199, and 208–215; these read CSKCNGKG, CGGCQGSG, CNDCKGTG, and CPQCKGEK. Basic and acidic residues predominate over residues 378–391; sequence TTLHDVNIEDEMKR. The disordered stretch occupies residues 378 to 419; that stretch reads TTLHDVNIEDEMKRKAQAQREAYDDDEEDHPGGAQRVQCAQQ. At Cys416 the chain carries Cysteine methyl ester. Cys416 is lipidated: S-farnesyl cysteine. A propeptide spans 417–419 (removed in mature form); it reads AQQ.

This sequence belongs to the DnaJ family. A/I subfamily. As to quaternary structure, homodimer. Zn(2+) serves as cofactor. Farnesylated. Expressed in both etiolated and light-grown tissues.

Its subcellular location is the membrane. Plays a continuous role in plant development probably in the structural organization of compartments. The chain is Chaperone protein dnaJ 2 (ATJ2) from Arabidopsis thaliana (Mouse-ear cress).